The chain runs to 999 residues: Protein Smaug (999 aa).

The segment covering 1 to 37 has biased composition (polar residues); that stretch reads MKYATGTDNAMTSGISGQTNNSNSVSNEMQPTTSTPT. 3 disordered regions span residues 1-45, 50-69, and 321-370; these read MKYA…EATS, TATYANGNPNSNANPSQSQP, and CSSV…GSSS. Positions 321-338 are enriched in low complexity; it reads CSSVASSSMCPASGSRSS. 2 positions are modified to phosphoserine: Ser564 and Ser575. An interaction with cup region spans residues 583–763; sequence EFKPNYIKFH…KDLKFKLSKM (181 aa). Residues 600–654 enclose the SAM domain; it reads GIGLWLKSLRLHKYIELFKNMTYEEMLLITEDFLQSVGVTKGASHKLALCIDKLK. The disordered stretch occupies residues 773-892; that stretch reads HVKPAGVGPN…HHHAQQMQQM (120 aa). Composition is skewed to polar residues over residues 801–822 and 854–864; these read KNGSNDRINNRKNSNDMLNFSL and HQPQYKSSSYP. Ser972 carries the post-translational modification Phosphoserine.

This sequence belongs to the SMAUG family. As to quaternary structure, interacts with oskar (osk). Binds to the 3'-UTR of nos. Interacts with cup, which in turn recruits eIF4-E, leading to an indirect interaction between smg and eIF4-E that prevents mRNA translation.

The protein localises to the cytoplasm. In terms of biological role, translation regulator that binds to the 3'-UTR of specific mRNAs such as nanos (nos) and prevent their translation. Prevents translation of unlocalized nos in the bulk cytoplasm via the recruitment of cup. The protein is Protein Smaug (smg) of Drosophila yakuba (Fruit fly).